The following is a 449-amino-acid chain: Capsid protein (449 aa).

The segment at 1–43 is DNA-binding; the sequence is MARRARRPRGRFYAFRRGRWHHLKRLRRRYKFRHRRRQRYRRR. Residues 6 to 47 are nuclear localization signals; sequence RRPRGRFYAFRRGRWHHLKRLRRRYKFRHRRRQRYRRRAFRK.

It belongs to the gyrovirus capsid protein family. Homomultimer (Potential). Interacts with Rep; this interaction relocates Rep into the nucleus.

The protein localises to the host nucleus. It localises to the virion. In terms of biological role, self-assembles to form the virion icosahedral capsid with a T=1 symmetry. This very small capsid (25 nm in diameter) allows the virus to be very stable in the environment and resistant to some disinfectants, including detergents. Essential for the initial attachment to host receptors. After attachment, the virus is endocytosed and traffics to the nucleus. The capsid protein binds and transports the viral genome and Rep across the nuclear envelope. In Chicken anemia virus (isolate Australia) (CAV), this protein is Capsid protein (VP1).